A 286-amino-acid chain; its full sequence is Energy-coupling factor transporter ATP-binding protein EcfA2 (286 aa).

The 244-residue stretch at 3–246 (IRFDNVSYTY…KEKLADWHIA (244 aa)) folds into the ABC transporter domain. 40-47 (GQTGSGKS) lines the ATP pocket.

This sequence belongs to the ABC transporter superfamily. Energy-coupling factor EcfA family. Forms a stable energy-coupling factor (ECF) transporter complex composed of 2 membrane-embedded substrate-binding proteins (S component), 2 ATP-binding proteins (A component) and 2 transmembrane proteins (T component).

It localises to the cell membrane. In terms of biological role, ATP-binding (A) component of a common energy-coupling factor (ECF) ABC-transporter complex. Unlike classic ABC transporters this ECF transporter provides the energy necessary to transport a number of different substrates. The chain is Energy-coupling factor transporter ATP-binding protein EcfA2 from Staphylococcus aureus (strain bovine RF122 / ET3-1).